The following is a 590-amino-acid chain: Cationic amino acid transporter 8, vacuolar (590 aa).

The Cytoplasmic portion of the chain corresponds to 1-85 (MIPASMEEAH…ESENPMRRCL (85 aa)). A helical membrane pass occupies residues 86–106 (TWWDLLWLSFGSVVGSGVFVI). Residues 107-114 (TGQEARVG) are Vacuolar-facing. A helical transmembrane segment spans residues 115–135 (AGPAVVLSYAISGVSALLSVL). Over 136–160 (CYAEFGVEIPVAGGSFSYLRVELGD) the chain is Cytoplasmic. Residues 161-181 (FIAFIAAGNILLEAMVGAAGL) traverse the membrane as a helical segment. The Vacuolar portion of the chain corresponds to 182–209 (GRSWSSYLASLVKNDSDYFRIKVDSFAK). N195 is a glycosylation site (N-linked (GlcNAc...) asparagine). A helical transmembrane segment spans residues 210–230 (GFDLLDPVAVAVLLVANGIAM). Residues 231 to 238 (TGTKRTSW) lie on the Cytoplasmic side of the membrane. A helical membrane pass occupies residues 239 to 259 (LNLITSMVTVCIIVFIVVVGF). The Vacuolar portion of the chain corresponds to 260-266 (THSKTSN). Residues 267 to 287 (LVPFFPYGAKGVVQSAAVVYW) form a helical membrane-spanning segment. Over 288 to 310 (SYTGFDMVANMAEETEKPSRDIP) the chain is Cytoplasmic. Residues 311–331 (IGLVGSMSMITVVYCLMALAL) traverse the membrane as a helical segment. The Vacuolar segment spans residues 332–359 (TMMVKYTEIDANAAYSVAFAQIGMKWAK). Residues 360–380 (YLVGICALKGMTTSLLVGSLG) traverse the membrane as a helical segment. Over 381–407 (QARYTTQIARSHMIPPWFALVHPKTGT) the chain is Cytoplasmic. Residues 408-428 (PIYATLLVTILSSIISFFTSL) traverse the membrane as a helical segment. Residue E429 is a topological domain, vacuolar. The chain crosses the membrane as a helical span at residues 430–450 (VLSSVFSFATLFIFMLVAVAL). Residues 451-465 (LVRRYYVKDVTPEAG) lie on the Cytoplasmic side of the membrane. A helical membrane pass occupies residues 466–486 (LLKFLGFLFLIIASSIGVSAL). Residues 487 to 493 (WNSGVKG) are Vacuolar-facing. The chain crosses the membrane as a helical span at residues 494–514 (WIAYTVTGVIWFIGTLGLALL). Topologically, residues 515 to 522 (PKYRVPKV) are cytoplasmic. The chain crosses the membrane as a helical span at residues 523-543 (WGVPLVPWLPSFSIAMNLFLI). Residues 544-553 (GSLGYVAFLR) are Vacuolar-facing. Residues 554 to 574 (FIICTMVMLLYYLFVGLHATY) form a helical membrane-spanning segment. Residues 575-590 (DVAHQPLEEAKFEGER) lie on the Cytoplasmic side of the membrane.

The protein belongs to the amino acid-polyamine-organocation (APC) superfamily. Cationic amino acid transporter (CAT) (TC 2.A.3.3) family. In terms of tissue distribution, expressed in roots, stems, flowers and leaves. Mostly present in young and rapidly dividing tissues such as the shoot and root apical meristem, and in young leaves and petioles during seedling development.

The protein resides in the cell membrane. Its function is as follows. Permease involved in the transport of the cationic neutral or acidic amino acids. The sequence is that of Cationic amino acid transporter 8, vacuolar (CAT8) from Arabidopsis thaliana (Mouse-ear cress).